A 492-amino-acid chain; its full sequence is Trypanothione reductase (492 aa).

Residue 35 to 52 (DVQTHHGPPHYAALGGTC) coordinates FAD. Cysteine 52 and cysteine 57 are oxidised to a cystine. Histidine 461 (proton acceptor) is an active-site residue.

Belongs to the class-I pyridine nucleotide-disulfide oxidoreductase family. As to quaternary structure, homodimer. The cofactor is FAD.

It localises to the cytoplasm. The enzyme catalyses trypanothione + NADP(+) = trypanothione disulfide + NADPH + H(+). Trypanothione is the parasite analog of glutathione; this enzyme is the equivalent of glutathione reductase. In Trypanosoma brucei brucei, this protein is Trypanothione reductase (TPR).